A 23-amino-acid polypeptide reads, in one-letter code: Ascaphin-1 (23 aa).

Asparagine 23 carries the post-translational modification Asparagine amide.

In terms of tissue distribution, expressed by the skin glands.

The protein resides in the secreted. Its function is as follows. Antimicrobial peptide that shows higher potency against Gram-negative bacteria than against Gram-positive bacteria. Has a very week hemolytic activity. This is Ascaphin-1 from Ascaphus truei (Coastal tailed frog).